Consider the following 321-residue polypeptide: CPX chromosomal region candidate gene 1 protein homolog (321 aa).

Residues 1–83 (MSSPTKEGSD…TEIQKDQREE (83 aa)) form a disordered region. Polar residues-rich tracts occupy residues 21–32 (NEPSNDCTTDIE) and 44–60 (VETNSINREPGTATSQE).

This Macaca fascicularis (Crab-eating macaque) protein is CPX chromosomal region candidate gene 1 protein homolog (CPXCR1).